The chain runs to 208 residues: Type 4 adapter protein LvgA (208 aa).

As to quaternary structure, the T4BSS is a complex nanomachine composed of several subcomplexes. This subunit is part of the Type IV Coupling Complex (T4CC), a subcomplex composed of the DotLMNYZ core and the IcmSW-LvgA adapter subunits, linked by the C-terminal tail of DotL. Interacts with DotL, IcmS and IcmW. Interacts with various effector proteins, including VpdB, SetA, PieA and SidH.

The protein resides in the cytoplasm. Functionally, component of the Dot/Icm type IVB secretion system (T4BSS), which is used to inject bacterial effector proteins into eukaryotic host cells. Part of a subcomplex which recruits effector proteins and delivers them to the core transmembrane subcomplex. Is a critical subunit for binding a subset of effector proteins. Recognizes more than one type of binding motif. May be a critical factor that confers host specificity. The sequence is that of Type 4 adapter protein LvgA from Legionella pneumophila subsp. pneumophila (strain Philadelphia 1 / ATCC 33152 / DSM 7513).